The chain runs to 167 residues: Putative defense protein Hdd11-like (167 aa).

A signal peptide spans 1 to 18 (MMFTYVVAVASVVALTSA). Residues 19–167 (YPTGAPPSAC…ESAPVKVLSH (149 aa)) enclose the Reelin domain. Cysteines 28 and 105 form a disulfide.

It belongs to the insect defense protein family. In larvae, high expression in the fat body and low expression in midgut, hemocytes and malpighian tubules. No expression in silkgland.

Its subcellular location is the secreted. May have antimicrobial activity. This Samia ricini (Indian eri silkmoth) protein is Putative defense protein Hdd11-like.